Consider the following 753-residue polypeptide: 5-methyltetrahydropteroyltriglutamate--homocysteine methyltransferase (753 aa).

5-methyltetrahydropteroyltri-L-glutamate contacts are provided by residues 17 to 20 and K117; that span reads RELK. L-homocysteine-binding positions include 431 to 433 and E484; that span reads IGS. Residues 431–433 and E484 each bind L-methionine; that span reads IGS. 5-methyltetrahydropteroyltri-L-glutamate-binding positions include 515-516 and W561; that span reads RC. L-homocysteine is bound at residue D599. D599 is an L-methionine binding site. E605 contacts 5-methyltetrahydropteroyltri-L-glutamate. The Zn(2+) site is built by H641, C643, and E665. The active-site Proton donor is the H694. Zn(2+) is bound at residue C726.

This sequence belongs to the vitamin-B12 independent methionine synthase family. Requires Zn(2+) as cofactor.

The enzyme catalyses 5-methyltetrahydropteroyltri-L-glutamate + L-homocysteine = tetrahydropteroyltri-L-glutamate + L-methionine. The protein operates within amino-acid biosynthesis; L-methionine biosynthesis via de novo pathway; L-methionine from L-homocysteine (MetE route): step 1/1. In terms of biological role, catalyzes the transfer of a methyl group from 5-methyltetrahydrofolate to homocysteine resulting in methionine formation. The protein is 5-methyltetrahydropteroyltriglutamate--homocysteine methyltransferase of Enterobacter sp. (strain 638).